The primary structure comprises 2190 residues: Non-reducing polyketide synthase mapC' (2190 aa).

Residues 14 to 268 (VLFGPQCPDI…HHEAHREGIQ (255 aa)) form an N-terminal acylcarrier protein transacylase domain (SAT) region. The 417-residue stretch at 401–817 (ASPIAITGMA…GSNAALIVKE (417 aa)) folds into the Ketosynthase family 3 (KS3) domain. Residues Cys566, His701, and His740 each act as for beta-ketoacyl synthase activity in the active site. The tract at residues 893–1190 (CFGGQNGLTA…NVTSALWAQG (298 aa)) is malonyl-CoA:ACP transacylase (MAT) domain. The active-site For acyl/malonyl transferase activity is Ser979. The tract at residues 1243-1375 (GQEAGLLCQL…GTVCLHQERS (133 aa)) is N-terminal hotdog fold. In terms of domain architecture, PKS/mFAS DH spans 1243-1552 (GQEAGLLCQL…FTSVSIRSLT (310 aa)). Positions 1251-1556 (QLSESPDERL…SIRSLTRALA (306 aa)) are product template (PT) domain. His1277 acts as the Proton acceptor; for dehydratase activity in catalysis. The C-terminal hotdog fold stretch occupies residues 1401–1552 (ASNGLKGSTV…FTSVSIRSLT (152 aa)). The active-site Proton donor; for dehydratase activity is the Asp1458. Residues 1597 to 1671 (ANDLATVQEM…GLVEHIFPGH (75 aa)) enclose the Carrier domain. Ser1631 is subject to O-(pantetheine 4'-phosphoryl)serine. The segment at 1840–2187 (ATMSPSKPIK…AEGYEFLRTH (348 aa)) is methyltransferase (CMeT) domain. Residues Ser1969, Asp2127, and His2159 each act as for thioesterase activity in the active site.

The protein localises to the cytoplasm. Its subcellular location is the cytosol. The enzyme catalyses 3 malonyl-CoA + acetyl-CoA + S-adenosyl-L-methionine + H(+) = 5-methylorsellinate + S-adenosyl-L-homocysteine + 3 CO2 + 4 CoA. Its pathway is secondary metabolite biosynthesis; terpenoid biosynthesis. Non-reducing polyketide synthase; part of the gene cluster that mediates the biosynthesis of mycophenolic acid (MPA), the first isolated antibiotic natural product in the world obtained from a culture of Penicillium brevicompactum in 1893. MpaC' catalyzes the synthesis of 5-methylorsellinic acid (5MOA) via the condensation of 1 acetyl-CoA starter unit with 3 malonyl-CoA units and one methylation step. The first step of the pathway is the synthesis of 5-methylorsellinic acid (5MOA) by the cytosolic polyketide synthase mpaC. 5MOA is then converted to the phthalide compound 5,7-dihydroxy-4,6-dimethylphthalide (DHMP) by the endoplasmic reticulum-bound cytochrome P450 monooxygenase mpaDE. MpaDE first catalyzes hydroxylation of 5-MOA to 4,6-dihydroxy-2-(hydroxymethyl)-3-methylbenzoic acid (DHMB). MpaDE then acts as a lactone synthase that catalyzes the ring closure to convert DHMB into DHMP. The next step is the prenylation of DHMP by the Golgi apparatus-associated prenyltransferase mpaA to yield farnesyl-DHMP (FDHMP). The ER-bound oxygenase mpaB then mediates the oxidative cleavage the C19-C20 double bond in FDHMP to yield FDHMP-3C via a mycophenolic aldehyde intermediate. The O-methyltransferase mpaG catalyzes the methylation of FDHMP-3C to yield MFDHMP-3C. After the cytosolic methylation of FDHMP-3C, MFDHMP-3C enters into peroxisomes probably via free diffusion due to its low molecular weight. Upon a peroxisomal CoA ligation reaction, catalyzed by a beta-oxidation component enzyme acyl-CoA ligase ACL891, MFDHMP-3C-CoA would then be restricted to peroxisomes for the following beta-oxidation pathway steps. The peroxisomal beta-oxidation machinery than converts MFDHMP-3C-CoA into MPA_CoA, via a beta-oxidation chain-shortening process. Finally mpaH acts as a peroxisomal acyl-CoA hydrolase with high substrate specificity toward MPA-CoA to release the final product MPA. The protein is Non-reducing polyketide synthase mapC' of Penicillium brevicompactum.